Consider the following 66-residue polypeptide: Large ribosomal subunit protein bL35 (66 aa).

This sequence belongs to the bacterial ribosomal protein bL35 family.

This is Large ribosomal subunit protein bL35 from Hyphomonas neptunium (strain ATCC 15444).